Reading from the N-terminus, the 270-residue chain is MQPYSNFSGLQQRTNNQVVIGSDMLAGTNKKGVLVPDADGYYLTPLGAYGTRNSAGMFYEMASGVSMFNPDSPLMRRVKKGVLFMEYKHPEPYRKDGTRMNEHEYLMRIRQIDDDRVCAHIKELILVDSTDEKGLPIKLVLGKCKPYGPFGKYFEASITNPSQNTYCSVRSITQDDPMRGIKYTREISTWDMVGEGGIYGANKWNSPALENYEDQLMVITPDTLYQVQRERERQINMGFECSDITNVTDLAKSLGWDISPVKHRRPGFMR.

Catalysis depends on residues H89, S168, and D191.

The self-cleavage of the C-terminus allows the activation of the protease.

It is found in the virion. In terms of biological role, serine protease that is responsible for cleaving many of the prohead proteins during a major morphogenetic step in viral capsid maturation. Cleaves the major capsid protein at 7 [A,G,S]-X-E recognition sites. The protein is Capsid maturation protease of Pseudomonas aeruginosa.